The primary structure comprises 311 residues: MNGVKIIAGTSNKTLSEEIAGYLGLRLTDALITTFSDGEIRVQINESIRGYHVYVITSLSNPVNHNLMELLLTLDAVKRSSPKEITAVVPYYAYGRQDRQDKPRTPISAKLVADLIQKAGANRVIVVDLHSPQIQGFFDIPVEHLTAIPVLYDYIRKNVVLENPIVVSPDAGGVKRARDLANKLGCGIGVILKRRPEPNKAEVMDVVGDIEGKEAIIVDDIIDTAGTLVAAANLLVNKGVKRVIACATHGIFSGPAVERLTNSPIEKVIVTNTLPVYEKKFGKLEVVSIAPLIGEAIRRIQEGTSVSSLFT.

ATP contacts are provided by residues 37-39 (DGE) and 96-97 (RQ). The Mg(2+) site is built by H130 and D170. Residue K193 is part of the active site. D-ribose 5-phosphate is bound by residues R195, D219, and 223 to 227 (DTAGT).

The protein belongs to the ribose-phosphate pyrophosphokinase family. Class I subfamily. As to quaternary structure, homohexamer. Mg(2+) is required as a cofactor.

It is found in the cytoplasm. It catalyses the reaction D-ribose 5-phosphate + ATP = 5-phospho-alpha-D-ribose 1-diphosphate + AMP + H(+). It functions in the pathway metabolic intermediate biosynthesis; 5-phospho-alpha-D-ribose 1-diphosphate biosynthesis; 5-phospho-alpha-D-ribose 1-diphosphate from D-ribose 5-phosphate (route I): step 1/1. Involved in the biosynthesis of the central metabolite phospho-alpha-D-ribosyl-1-pyrophosphate (PRPP) via the transfer of pyrophosphoryl group from ATP to 1-hydroxyl of ribose-5-phosphate (Rib-5-P). This is Ribose-phosphate pyrophosphokinase from Aquifex aeolicus (strain VF5).